The chain runs to 342 residues: Isopentenyl-diphosphate delta-isomerase (342 aa).

Residue 11-12 participates in substrate binding; that stretch reads RK. FMN contacts are provided by residues serine 68, 69–71, serine 99, and asparagine 128; that span reads SMT. 99 to 101 lines the substrate pocket; it reads SQR. Glutamine 162 contacts substrate. Glutamate 163 lines the Mg(2+) pocket. Residues lysine 194, serine 219, threonine 224, 275–277, and 296–297 each bind FMN; these read GVR and AK.

The protein belongs to the IPP isomerase type 2 family. Homooctamer. Dimer of tetramers. FMN is required as a cofactor. Requires NADPH as cofactor. Mg(2+) serves as cofactor.

It is found in the cytoplasm. It carries out the reaction isopentenyl diphosphate = dimethylallyl diphosphate. Involved in the biosynthesis of isoprenoids. Catalyzes the 1,3-allylic rearrangement of the homoallylic substrate isopentenyl (IPP) to its allylic isomer, dimethylallyl diphosphate (DMAPP). The chain is Isopentenyl-diphosphate delta-isomerase from Legionella pneumophila (strain Corby).